The chain runs to 175 residues: Anterior gradient protein 2 homolog (175 aa).

Residues 1–20 (MEKFSVSAILLLVAISGTLA) form the signal peptide. Residues 21-40 (KDTTVKSGAKKDPKDSRPKL) form a required to promote cell adhesion region. Positions 24 to 44 (TVKSGAKKDPKDSRPKLPQTL) are disordered. Basic and acidic residues predominate over residues 29-38 (AKKDPKDSRP). 2 short sequence motifs (homodimer stabilization; interchain) span residues 45-54 (SRGWGDQLIW) and 60-67 (EALYRSKT).

It belongs to the AGR family. Monomer and homodimer. Interacts with LYPD3 and DAG1 (alphaDAG1). Interacts with MUC2; disulfide-linked. Expressed in lung, skeletal muscle, testis, liver, stomach, colon, small intestine, the goblet cells of the intestine and the mucuous neck cells of the stomach.

The protein resides in the secreted. Its subcellular location is the endoplasmic reticulum. Its function is as follows. Required for MUC2 post-transcriptional synthesis and secretion. May play a role in the production of mucus by intestinal cells. Proto-oncogene that may play a role in cell migration, cell differentiation and cell growth. Promotes cell adhesion. This is Anterior gradient protein 2 homolog (Agr2) from Mus musculus (Mouse).